We begin with the raw amino-acid sequence, 569 residues long: Proline--tRNA ligase (569 aa).

It belongs to the class-II aminoacyl-tRNA synthetase family. ProS type 1 subfamily. In terms of assembly, homodimer.

Its subcellular location is the cytoplasm. The catalysed reaction is tRNA(Pro) + L-proline + ATP = L-prolyl-tRNA(Pro) + AMP + diphosphate. In terms of biological role, catalyzes the attachment of proline to tRNA(Pro) in a two-step reaction: proline is first activated by ATP to form Pro-AMP and then transferred to the acceptor end of tRNA(Pro). As ProRS can inadvertently accommodate and process non-cognate amino acids such as alanine and cysteine, to avoid such errors it has two additional distinct editing activities against alanine. One activity is designated as 'pretransfer' editing and involves the tRNA(Pro)-independent hydrolysis of activated Ala-AMP. The other activity is designated 'posttransfer' editing and involves deacylation of mischarged Ala-tRNA(Pro). The misacylated Cys-tRNA(Pro) is not edited by ProRS. The polypeptide is Proline--tRNA ligase (Desulforamulus reducens (strain ATCC BAA-1160 / DSM 100696 / MI-1) (Desulfotomaculum reducens)).